The sequence spans 416 residues: Gamma-glutamyl phosphate reductase (416 aa).

The protein belongs to the gamma-glutamyl phosphate reductase family.

The protein resides in the cytoplasm. The catalysed reaction is L-glutamate 5-semialdehyde + phosphate + NADP(+) = L-glutamyl 5-phosphate + NADPH + H(+). It participates in amino-acid biosynthesis; L-proline biosynthesis; L-glutamate 5-semialdehyde from L-glutamate: step 2/2. Functionally, catalyzes the NADPH-dependent reduction of L-glutamate 5-phosphate into L-glutamate 5-semialdehyde and phosphate. The product spontaneously undergoes cyclization to form 1-pyrroline-5-carboxylate. The protein is Gamma-glutamyl phosphate reductase of Halalkalibacterium halodurans (strain ATCC BAA-125 / DSM 18197 / FERM 7344 / JCM 9153 / C-125) (Bacillus halodurans).